Consider the following 353-residue polypeptide: UPF0283 membrane protein KPK_3110 (353 aa).

3 consecutive transmembrane segments (helical) span residues 70-90, 99-119, and 213-233; these read MVSA…VQWT, WIAL…VGSV, and ESTL…FIAW.

It belongs to the UPF0283 family.

The protein resides in the cell inner membrane. In Klebsiella pneumoniae (strain 342), this protein is UPF0283 membrane protein KPK_3110.